Reading from the N-terminus, the 208-residue chain is Protein-L-isoaspartate O-methyltransferase (208 aa).

Ser59 is a catalytic residue.

It belongs to the methyltransferase superfamily. L-isoaspartyl/D-aspartyl protein methyltransferase family.

The protein resides in the cytoplasm. It carries out the reaction [protein]-L-isoaspartate + S-adenosyl-L-methionine = [protein]-L-isoaspartate alpha-methyl ester + S-adenosyl-L-homocysteine. In terms of biological role, catalyzes the methyl esterification of L-isoaspartyl residues in peptides and proteins that result from spontaneous decomposition of normal L-aspartyl and L-asparaginyl residues. It plays a role in the repair and/or degradation of damaged proteins. This Cronobacter sakazakii (strain ATCC BAA-894) (Enterobacter sakazakii) protein is Protein-L-isoaspartate O-methyltransferase.